Consider the following 206-residue polypeptide: Protein Nef (206 aa).

A lipid anchor (N-myristoyl glycine; by host) is attached at Gly-2. Residue Ser-6 is modified to Phosphoserine; by host. The interval 62–65 (QNEE) is acidic; interacts with host PACS1 and PACS2; stabilizes the interaction of NEF/MHC-I with host AP1M1; necessary for MHC-I internalization. An SH3-binding; interaction with Src family tyrosine kinases region spans residues 69 to 78 (PVRPQVPLRP). The short motif at 72–75 (PQVP) is the PxxP; stabilizes the interaction of NEF/MHC-I with host AP1M1; necessary for MHC-I internalization element. The mediates dimerization, Nef-PTE1 interaction stretch occupies residues 108-124 (EILDLWVYHTQGFFPDW). The segment at 148–180 (LEPEEVERANEGDNNILLHPICQHGQEDEAREV) is binding to ATP6V1H. The Dileucine internalization motif; necessary for CD4 internalization motif lies at 164 to 165 (LL). Residues 174-175 (ED) carry the Diacidic; necessary for CD4 internalization motif.

It belongs to the lentivirus primate group Nef protein family. In terms of assembly, monomer; cytosolic form. Homodimer; membrane bound form. Interacts with Nef associated p21-activated kinase (PAK2); this interaction activates PAK2. Associates with the Nef-MHC-I-AP1 complex; this complex is required for MHC-I internalization. Interacts (via C-terminus) with host PI3-kinase. Interacts with host PACS1; this interaction seems to be weak. Interacts with host PACS2. Interacts with host LCK and MAPK3; these interactions inhibit the kinase activity of the latter. Interacts with host ATP6V1H; this interaction may play a role in CD4 endocytosis. Associates with the CD4-Nef-AP2 complex; this complex is required for CD4 internalization. Interacts with host AP2 subunit alpha and AP2 subunit sigma2. Interacts with TCR-zeta chain; this interaction up-regulates the Fas ligand (FasL) surface expression. Interacts with host HCK, LYN, and SRC; these interactions activate the Src family kinases. Interacts with MAP3K5; this interaction inhibits the Fas and TNFR-mediated death signals. Interacts with beta-COP and PTE1. Interacts with human RACK1; this increases Nef phosphorylation by PKC. Interacts with TP53; this interaction decreases the half-life of TP53, protecting the infected cell against p53-mediated apoptosis. Post-translationally, the virion-associated Nef proteins are cleaved by the viral protease to release the soluble C-terminal core protein. Nef is probably cleaved concomitantly with viral structural proteins on maturation of virus particles. In terms of processing, myristoylated. Phosphorylated on serine residues, probably by host PKCdelta and theta.

Its subcellular location is the host cell membrane. It is found in the virion. The protein localises to the secreted. The protein resides in the host Golgi apparatus membrane. Factor of infectivity and pathogenicity, required for optimal virus replication. Alters numerous pathways of T-lymphocyte function and down-regulates immunity surface molecules in order to evade host defense and increase viral infectivity. Alters the functionality of other immunity cells, like dendritic cells, monocytes/macrophages and NK cells. In terms of biological role, in infected CD4(+) T-lymphocytes, down-regulates the surface MHC-I, mature MHC-II, CD4, CD28, CCR5 and CXCR4 molecules. Mediates internalization and degradation of host CD4 through the interaction of with the cytoplasmic tail of CD4, the recruitment of AP-2 (clathrin adapter protein complex 2), internalization through clathrin coated pits, and subsequent transport to endosomes and lysosomes for degradation. Diverts host MHC-I molecules to the trans-Golgi network-associated endosomal compartments by an endocytic pathway to finally target them for degradation. MHC-I down-regulation may involve AP-1 (clathrin adapter protein complex 1) or possibly Src family kinase-ZAP70/Syk-PI3K cascade recruited by PACS2. In consequence infected cells are masked for immune recognition by cytotoxic T-lymphocytes. Decreasing the number of immune receptors also prevents reinfection by more HIV particles (superinfection). Down-regulates host SERINC3 and SERINC5 thereby excluding these proteins from the viral particles. Virion infectivity is drastically higher when SERINC3 or SERINC5 are excluded from the viral envelope, because these host antiviral proteins impair the membrane fusion event necessary for subsequent virion penetration. Functionally, bypasses host T-cell signaling by inducing a transcriptional program nearly identical to that of anti-CD3 cell activation. Interaction with TCR-zeta chain up-regulates the Fas ligand (FasL). Increasing surface FasL molecules and decreasing surface MHC-I molecules on infected CD4(+) cells send attacking cytotoxic CD8+ T-lymphocytes into apoptosis. Its function is as follows. Plays a role in optimizing the host cell environment for viral replication without causing cell death by apoptosis. Protects the infected cells from apoptosis in order to keep them alive until the next virus generation is ready to strike. Inhibits the Fas and TNFR-mediated death signals by blocking MAP3K5/ASK1. Decreases the half-life of TP53, protecting the infected cell against p53-mediated apoptosis. Inhibits the apoptotic signals regulated by the Bcl-2 family proteins through the formation of a Nef/PI3-kinase/PAK2 complex that leads to activation of PAK2 and induces phosphorylation of host BAD. Extracellular Nef protein targets CD4(+) T-lymphocytes for apoptosis by interacting with CXCR4 surface receptors. This Simian immunodeficiency virus (isolate MB66) (SIV-cpz) protein is Protein Nef.